A 76-amino-acid polypeptide reads, in one-letter code: Acyl carrier protein (76 aa).

The Carrier domain maps to 1–76 (MSIEERVKKI…SAIDYVQNNQ (76 aa)). Residue serine 36 is modified to O-(pantetheine 4'-phosphoryl)serine.

Belongs to the acyl carrier protein (ACP) family. 4'-phosphopantetheine is transferred from CoA to a specific serine of apo-ACP by AcpS. This modification is essential for activity because fatty acids are bound in thioester linkage to the sulfhydryl of the prosthetic group.

The protein localises to the cytoplasm. The protein operates within lipid metabolism; fatty acid biosynthesis. In terms of biological role, carrier of the growing fatty acid chain in fatty acid biosynthesis. This Actinobacillus succinogenes (strain ATCC 55618 / DSM 22257 / CCUG 43843 / 130Z) protein is Acyl carrier protein.